Reading from the N-terminus, the 226-residue chain is Probable transcriptional regulatory protein y4xI (226 aa).

The region spanning 1-114 is the Response regulatory domain; that stretch reads MRTLLVDTDL…ELIARMRALL (114 aa). The segment at residues 122–220 is a DNA-binding region (ompR/PhoB-type); the sequence is CPIIEFGNLH…VRGIGYTLEL (99 aa).

The protein resides in the cytoplasm. In Sinorhizobium fredii (strain NBRC 101917 / NGR234), this protein is Probable transcriptional regulatory protein y4xI.